A 1353-amino-acid polypeptide reads, in one-letter code: Tenascin-R (1353 aa).

A signal peptide spans M1 to L33. A coiled-coil region spans residues S132 to S156. 2 N-linked (GlcNAc...) asparagine glycosylation sites follow: N179 and N197. 4 consecutive EGF-like domains span residues C187 to C198, C234 to C260, C265 to C291, and G292 to S323. N277 carries an N-linked (GlcNAc...) asparagine glycan. 2 disulfide bridges follow: C296–C306 and C313–C322. Fibronectin type-III domains follow at residues P327–G419, L420–D504, G505–D594, A595–D686, S687–I776, T777–D863, A864–A952, P953–D1037, and P1038–V1126. N-linked (GlcNAc...) asparagine glycosylation is found at N391, N469, and N580. Residues N734, N790, N872, N1031, N1041, N1256, and N1342 are each glycosylated (N-linked (GlcNAc...) asparagine). Residues G1124 to N1339 enclose the Fibrinogen C-terminal domain.

It belongs to the tenascin family. As to quaternary structure, forms homodimers and homotrimers. Interacts with CNTN1, NFASC and CSPG5. As to expression, brain specific.

The protein localises to the secreted. It localises to the extracellular space. The protein resides in the extracellular matrix. Functionally, neural extracellular matrix (ECM) protein involved in interactions with different cells and matrix components. Involved in cell attachment and neurite formation. Interaction with CNTN1 enhances the neurite outgrowth. The polypeptide is Tenascin-R (TNR) (Gallus gallus (Chicken)).